The following is a 331-amino-acid chain: Glucokinase (331 aa).

13-18 (GDIGGT) contributes to the ATP binding site.

This sequence belongs to the bacterial glucokinase family.

The protein resides in the cytoplasm. It catalyses the reaction D-glucose + ATP = D-glucose 6-phosphate + ADP + H(+). This is Glucokinase from Caulobacter vibrioides (strain ATCC 19089 / CIP 103742 / CB 15) (Caulobacter crescentus).